Reading from the N-terminus, the 149-residue chain is Cyanate hydratase (149 aa).

Catalysis depends on residues Arg-90, Glu-93, and Ser-116.

The protein belongs to the cyanase family.

The enzyme catalyses cyanate + hydrogencarbonate + 3 H(+) = NH4(+) + 2 CO2. In terms of biological role, catalyzes the reaction of cyanate with bicarbonate to produce ammonia and carbon dioxide. The chain is Cyanate hydratase from Synechocystis sp. (strain ATCC 27184 / PCC 6803 / Kazusa).